Consider the following 956-residue polypeptide: DNA ligase 4 (956 aa).

The ATP site is built by glutamate 307, lysine 309, isoleucine 310, arginine 314, glutamate 371, phenylalanine 409, glutamate 476, lysine 481, lysine 498, and lysine 500. Lysine 309 functions as the N6-AMP-lysine intermediate in the catalytic mechanism. Glutamate 371 contacts Mg(2+). Position 476 (glutamate 476) interacts with Mg(2+). The segment at 666-700 (LEDRKRRNAGPGRGAKRLKLANVSSDEDELGTDER) is disordered. 2 BRCT domains span residues 700–793 (RPTS…PRNL) and 857–956 (PKGM…DYPL).

Belongs to the ATP-dependent DNA ligase family. Requires Mg(2+) as cofactor.

The protein localises to the nucleus. It carries out the reaction ATP + (deoxyribonucleotide)n-3'-hydroxyl + 5'-phospho-(deoxyribonucleotide)m = (deoxyribonucleotide)n+m + AMP + diphosphate.. Its function is as follows. DNA ligase involved in DNA non-homologous end joining (NHEJ); required for double-strand break (DSB) repair. The protein is DNA ligase 4 (LIG4) of Yarrowia lipolytica (strain CLIB 122 / E 150) (Yeast).